We begin with the raw amino-acid sequence, 266 residues long: Glutamate racemase (266 aa).

Residues 9–10 (DS) and 41–42 (YG) each bind substrate. Cysteine 73 (proton donor/acceptor) is an active-site residue. 74-75 (NT) contacts substrate. Cysteine 183 acts as the Proton donor/acceptor in catalysis. 184 to 185 (TH) is a substrate binding site.

This sequence belongs to the aspartate/glutamate racemases family.

The catalysed reaction is L-glutamate = D-glutamate. Its pathway is cell wall biogenesis; peptidoglycan biosynthesis. Functionally, provides the (R)-glutamate required for cell wall biosynthesis. The polypeptide is Glutamate racemase (Shewanella woodyi (strain ATCC 51908 / MS32)).